A 381-amino-acid chain; its full sequence is KRR1 small subunit processome component homolog (381 aa).

The interval 1-51 (MASPSLERPEKGAGKSEFRNQKPKPENQDESELLTVPDGWKEPAFSKEDNP) is disordered. Position 2 is an N-acetylalanine (A2). 2 positions are modified to phosphoserine: S3 and S5. 2 stretches are compositionally biased toward basic and acidic residues: residues 7-27 (ERPE…KPEN) and 39-51 (GWKE…EDNP). K24 is covalently cross-linked (Glycyl lysine isopeptide (Lys-Gly) (interchain with G-Cter in SUMO2)). A KH domain is found at 154–206 (KERFVKRRQRLIGPKGSTLKALELLTNCYIMVQGNTVSAIGPFSGLKEVRKVV). Positions 250–262 (NVNKRKEPKKKTV) are enriched in basic residues. 2 disordered regions span residues 250–278 (NVNK…ESQI) and 309–338 (AISK…ASTE). Residues K340 and K369 each participate in a glycyl lysine isopeptide (Lys-Gly) (interchain with G-Cter in SUMO2) cross-link.

This sequence belongs to the KRR1 family. Part of the small subunit (SSU) processome, composed of more than 70 proteins and the RNA chaperone small nucleolar RNA (snoRNA) U3. As to quaternary structure, (Microbial infection) Directly interacts with HIV-1 protein VPR. Also identified in a complex with NR3C1 and HIV-1 protein VPR.

The protein localises to the nucleus. It localises to the nucleolus. It is found in the cytoplasm. In terms of biological role, part of the small subunit (SSU) processome, first precursor of the small eukaryotic ribosomal subunit. During the assembly of the SSU processome in the nucleolus, many ribosome biogenesis factors, an RNA chaperone and ribosomal proteins associate with the nascent pre-rRNA and work in concert to generate RNA folding, modifications, rearrangements and cleavage as well as targeted degradation of pre-ribosomal RNA by the RNA exosome. This is KRR1 small subunit processome component homolog from Homo sapiens (Human).